We begin with the raw amino-acid sequence, 490 residues long: Capsid protein (490 aa).

The disordered stretch occupies residues 79 to 143 (GETSEEESDS…TQPKTIPGQK (65 aa)). A compositionally biased stretch (acidic residues) spans 81–94 (TSEEESDSGEEPEF). Basic and acidic residues predominate over residues 95 to 111 (EQVRMDRTGGTEIPKEE). Positions 122 to 125 (RKRK) match the Nuclear localization signal motif. The CCHC-type zinc finger occupies 411–428 (CRCWICNIEGHYANECPN). The tract at residues 464 to 490 (YKEEEEETSTEEDDGSSTSEDSDSESD) is disordered. Residues 465–490 (KEEEEETSTEEDDGSSTSEDSDSESD) show a composition bias toward acidic residues.

Belongs to the caulimoviridae capsid protein family. In terms of assembly, interacts (via nuclear localization signal) with host importin alpha.

The protein resides in the virion. Its subcellular location is the host nucleus. Functionally, self assembles to form an icosahedral capsid, about 50 nm in diameter, nm, composed of 420 subunits of the viral capsid protein. The capsid encapsulates the genomic dsDNA. Following virus entry into host cell, provides nuclear import of the viral genome. Virus particles do not enter the nucleus, but dock at the nuclear membrane through the interaction with host importins. In Arabidopsis thaliana (Mouse-ear cress), this protein is Capsid protein.